The primary structure comprises 76 residues: UPF0154 protein Exig_1099 (76 aa).

Residues 4-24 (WIWILIALLCLVAGVALGFYI) traverse the membrane as a helical segment. Positions 54 to 76 (KPSQKKVNQVMRSMSGSMKSPKK) are disordered.

This sequence belongs to the UPF0154 family.

Its subcellular location is the cell membrane. This Exiguobacterium sibiricum (strain DSM 17290 / CCUG 55495 / CIP 109462 / JCM 13490 / 255-15) protein is UPF0154 protein Exig_1099.